The chain runs to 675 residues: PTS system glucose-specific EIICBA component (675 aa).

The PTS EIIC type-1 domain occupies 3 to 414; it reads KKLFGQMQRI…FNYKTPGRED (412 aa). Transmembrane regions (helical) follow at residues 16–36, 59–79, 81–101, 126–146, 170–190, 211–231, 273–293, 303–323, 328–348, 355–375, and 378–398; these read LMLP…GTAF, MLTG…ALGV, IGLA…FIIL, VLGI…GALA, FVPI…AIIW, LAVF…LHHI, FMQG…LAIY, VVAG…ITEP, FLFV…LSFL, VHLG…GILP, and TAWW…YFVF. The 82-residue stretch at 425–506 folds into the PTS EIIB type-1 domain; it reads SQLPFDVLKA…AKIISGEITK (82 aa). C447 (phosphocysteine intermediate; for EIIB activity) is an active-site residue. A PTS EIIA type-1 domain is found at 547–651; that stretch reads DKVFSEKMMG…SIITPVIITN (105 aa). H599 acts as the Tele-phosphohistidine intermediate; for EIIA activity in catalysis.

It localises to the cell membrane. The catalysed reaction is N(pros)-phospho-L-histidyl-[protein] + D-glucose(out) = D-glucose 6-phosphate(in) + L-histidyl-[protein]. In terms of biological role, the phosphoenolpyruvate-dependent sugar phosphotransferase system (sugar PTS), a major carbohydrate active transport system, catalyzes the phosphorylation of incoming sugar substrates concomitantly with their translocation across the cell membrane. This system is involved in glucose transport. In Staphylococcus epidermidis, this protein is PTS system glucose-specific EIICBA component (ptsG).